The sequence spans 303 residues: MHIYILGSAAGGGFPQWNCNCPNCHGVRTGTINAKVRTQSSIAISENGVDWILLNASPDIRQQLFDFKAAQPARKLRDTGITNVILMDSQLDHTTGLLTLREGCPINVWCTEMVYQDLTTGFPVFNMLKHWNGGLLYHQIDPKQAFKIDGFENLEFLPLIIQSAAPPYSPHRHDPHEGDNIALIIKDHKTQKQLFYAPGLGKIDDQIMQIMQDSDCVMIDGTLWTDDEMQQTGVGKKTGREMGHLYISGEGGSLSYLNQLSTPKKVLIHINNTNPILNEDSAQFAELKANDVEVAFDGMQIEL.

The protein belongs to the PqqB family.

It functions in the pathway cofactor biosynthesis; pyrroloquinoline quinone biosynthesis. In terms of biological role, may be involved in the transport of PQQ or its precursor to the periplasm. This Acinetobacter baumannii (strain AB0057) protein is Coenzyme PQQ synthesis protein B.